The following is a 452-amino-acid chain: UPF0210 protein Dred_1672 (452 aa).

The protein belongs to the UPF0210 family. Homodimer.

This is UPF0210 protein Dred_1672 from Desulforamulus reducens (strain ATCC BAA-1160 / DSM 100696 / MI-1) (Desulfotomaculum reducens).